Consider the following 544-residue polypeptide: Ribosomal oxygenase 1 (544 aa).

Residues 1–78 (MERKHMSALS…HEGERDCREM (78 aa)) are disordered. Residues 10-19 (SIYQSLSGGK) are compositionally biased toward polar residues. Positions 42-53 (PSKKATKKKGTK) are enriched in basic residues. Basic and acidic residues predominate over residues 63–78 (SSEKEKHEGERDCREM). One can recognise a JmjC domain in the interval 197 to 342 (CSIRMLNPQA…DLMLKLMPAA (146 aa)). 3 residues coordinate Fe cation: histidine 243, aspartate 245, and histidine 308.

Belongs to the ROX family. NO66 subfamily. The cofactor is Fe(2+).

Its subcellular location is the nucleus. It localises to the nucleolus. It is found in the nucleoplasm. The catalysed reaction is N(6),N(6)-dimethyl-L-lysyl(36)-[histone H3] + 2 2-oxoglutarate + 2 O2 = L-lysyl(36)-[histone H3] + 2 formaldehyde + 2 succinate + 2 CO2. It carries out the reaction N(6)-methyl-L-lysyl-[protein] + 2-oxoglutarate + O2 = L-lysyl-[protein] + formaldehyde + succinate + CO2. It catalyses the reaction L-histidyl-[protein] + 2-oxoglutarate + O2 = (3S)-3-hydroxy-L-histidyl-[protein] + succinate + CO2. Oxygenase that can act as both a histone lysine demethylase and a ribosomal histidine hydroxylase. Specifically demethylates 'Lys-4' (H3K4me) and 'Lys-36' (H3K36me) of histone H3, thereby playing a central role in histone code. Preferentially demethylates trimethylated H3 'Lys-4' (H3K4me3) and monomethylated H3 'Lys-4' (H3K4me1) residues, while it has weaker activity for dimethylated H3 'Lys-36' (H3K36me2). Also catalyzes demethylation of non-histone proteins. Also catalyzes the hydroxylation of 60S ribosomal protein L8 on 'His-216', thereby playing a role in ribosome biogenesis. In Danio rerio (Zebrafish), this protein is Ribosomal oxygenase 1 (riox1).